We begin with the raw amino-acid sequence, 234 residues long: Probable RNA/DNA demethylase ALKBH6 (234 aa).

The Fe2OG dioxygenase domain occupies 96–222; it reads TANHVLVNEY…RVSLTIRHVP (127 aa). 2-oxoglutarate-binding residues include Asn103 and Tyr105. His114, Asp116, and His180 together coordinate Fe cation. Residues Arg213 and Ser215 each contribute to the 2-oxoglutarate site.

It belongs to the alkB family. Fe(2+) is required as a cofactor.

Its subcellular location is the cytoplasm. The protein resides in the nucleus. Functionally, probable Fe(2+)/2-oxoglutarate-dependent dioxygenase involved in oxidative demethylation of nucleic acids. Binds nucleic acids with a preference for ssDNA or ssRNA to other types of DNAs. May play a role in nucleic acid damage repair. The chain is Probable RNA/DNA demethylase ALKBH6 (alkbh6) from Danio rerio (Zebrafish).